Consider the following 165-residue polypeptide: Aspartate carbamoyltransferase regulatory chain (165 aa).

Residues Cys-121, Cys-126, Cys-149, and Cys-152 each coordinate Zn(2+).

It belongs to the PyrI family. In terms of assembly, contains catalytic and regulatory chains. Requires Zn(2+) as cofactor.

Its function is as follows. Involved in allosteric regulation of aspartate carbamoyltransferase. This is Aspartate carbamoyltransferase regulatory chain from Methanoregula boonei (strain DSM 21154 / JCM 14090 / 6A8).